The following is a 412-amino-acid chain: Vacuolar calcium ion transporter (412 aa).

Residues 1 to 55 lie on the Cytoplasmic side of the membrane; the sequence is MIERLKIAKNRLEAMNSFNFPAQDRHERAPLLGSEYDHSMARQLSLLNVVGMTKS. Residues 56-76 form a helical membrane-spanning segment; sequence VLMSSYFNLMLVFVPIGLIAG. Over 77-83 the chain is Lumenal; it reads WFEWNAK. Residues 84 to 104 traverse the membrane as a helical segment; that stretch reads SVFILNMLAIIPLASLLSFAT. Over 105–114 the chain is Cytoplasmic; that stretch reads EQLSIISGPT. Residues 115–135 form a helical membrane-spanning segment; that stretch reads LGALLNASFGNAIELIVGVLA. Residues 136–148 lie on the Lumenal side of the membrane; the sequence is LKRGELRIVQSSL. Residues 149-169 form a helical membrane-spanning segment; the sequence is LGSILSNLLLVFGMCLVTTGI. Residues 170 to 177 lie on the Cytoplasmic side of the membrane; sequence RREITTFN. A helical transmembrane segment spans residues 178–198; it reads ITVAQTMIAMLALSTATILIP. Residues 199-215 are Lumenal-facing; that stretch reads ATFHYSLPDNANSENAL. The chain crosses the membrane as a helical span at residues 216–236; that stretch reads LHVSRGTAVIVLIVYVLLLVF. Residues 237 to 264 are Cytoplasmic-facing; sequence QLKTHKHVCHDPSEVEEETEPRILGLRS. Residues 265–285 traverse the membrane as a helical segment; the sequence is SIAMLAIVTVFVSLCADYLVG. Residues 286–299 are Lumenal-facing; that stretch reads SIDQLVEEVNISKT. Residues 300–320 form a helical membrane-spanning segment; the sequence is FVGLVILPVVGNAAEHVTAIV. Over 321 to 334 the chain is Cytoplasmic; that stretch reads VSYRGQMDLALGVA. Residues 335-355 traverse the membrane as a helical segment; the sequence is IGSSIQIALFLAPFLVIVGWI. Topologically, residues 356 to 358 are lumenal; the sequence is ISQ. Residues 359–379 traverse the membrane as a helical segment; it reads PLTLYFESLETVILFVSVFLV. The Cytoplasmic segment spans residues 380–389; that stretch reads NYLIQDGATH. A helical membrane pass occupies residues 390–410; it reads WLEGVQLLALYAIVVLAFFYY. Residues 411–412 lie on the Lumenal side of the membrane; the sequence is PQ.

This sequence belongs to the Ca(2+):cation antiporter (CaCA) (TC 2.A.19) family.

It localises to the vacuole membrane. Its subcellular location is the endoplasmic reticulum membrane. Functionally, has a role in promoting intracellular calcium ion sequestration via the exchange of calcium ions for hydrogen ions across the vacuolar membrane. Involved also in manganese ion homeostasis via its uptake into the vacuole. The chain is Vacuolar calcium ion transporter (vcx1) from Schizosaccharomyces pombe (strain 972 / ATCC 24843) (Fission yeast).